The chain runs to 364 residues: WAT1-related protein At3g30340 (364 aa).

The next 10 membrane-spanning stretches (helical) occupy residues 9-29 (WKAVLMMSMINIGLSVVNVMF), 41-61 (VATTYRLAVGTLFLIPFAIFL), 76-96 (SLFFSALLGTSLVQYFFLIGL), 102-122 (TFSLAFSNMVPSVTFALALVF), 138-158 (LLGTMICICGALVLTLYKGTA), 183-203 (WAMGSIMLVISIIIWSSWFIV), 215-235 (YTSTTILSFFGVIQSALLSLI), 251-271 (VLALLYSGIVGSGLCYVGMSW), 277-297 (GAVFTSSFIPLIQVFAAIFSF), and 304-324 (IYCGSVIGSMVIIVGLYILLW). 2 consecutive EamA domains span residues 26–152 (NVMF…LVLT) and 195–323 (IIWS…YILL).

Belongs to the drug/metabolite transporter (DMT) superfamily. Plant drug/metabolite exporter (P-DME) (TC 2.A.7.4) family.

It localises to the membrane. The polypeptide is WAT1-related protein At3g30340 (Arabidopsis thaliana (Mouse-ear cress)).